The primary structure comprises 103 residues: Flagellar hook-basal body complex protein FliE (103 aa).

Belongs to the FliE family.

It is found in the bacterial flagellum basal body. The polypeptide is Flagellar hook-basal body complex protein FliE (Yersinia enterocolitica serotype O:8 / biotype 1B (strain NCTC 13174 / 8081)).